Here is a 311-residue protein sequence, read N- to C-terminus: MKITAKAWAKTNLHLGVGPAHDDGFHELMTVFQTIDLFDTVTLTTLDEELVEEGSVVKQLSVTGARGVPEDASNLAWRAVDALVKRRAEKTPLSAVSLHISKGIPVAGGMAGGSADAAATLRAVDAWIGPFGEDTLLEVAAELGSDVPFCLLGGTMRGTGRGEQLVDMLTRGKLHWVVAAMAHGLSTPEVFKKHDELNPESHMDISDLSAALLTGNTAEVGQWLHNDLTSAALSLRPELRSVLQEGIRSGAHAGIVSGSGPTTVFLCESEHKAQDVKEALIDAGQVYAAYTATGPAASTADQRGAHILTVS.

Lys-10 is an active-site residue. 105–115 (PVAGGMAGGSA) serves as a coordination point for ATP. Asp-146 is an active-site residue.

This sequence belongs to the GHMP kinase family. IspE subfamily.

The enzyme catalyses 4-CDP-2-C-methyl-D-erythritol + ATP = 4-CDP-2-C-methyl-D-erythritol 2-phosphate + ADP + H(+). The protein operates within isoprenoid biosynthesis; isopentenyl diphosphate biosynthesis via DXP pathway; isopentenyl diphosphate from 1-deoxy-D-xylulose 5-phosphate: step 3/6. In terms of biological role, catalyzes the phosphorylation of the position 2 hydroxy group of 4-diphosphocytidyl-2C-methyl-D-erythritol. The sequence is that of 4-diphosphocytidyl-2-C-methyl-D-erythritol kinase from Corynebacterium glutamicum (strain ATCC 13032 / DSM 20300 / JCM 1318 / BCRC 11384 / CCUG 27702 / LMG 3730 / NBRC 12168 / NCIMB 10025 / NRRL B-2784 / 534).